The following is a 261-amino-acid chain: Putative outer membrane protein CT_371 (261 aa).

The first 18 residues, 1–18 (MRLCFILFLLLSPLISEA), serve as a signal peptide directing secretion.

It is found in the cell outer membrane. The sequence is that of Putative outer membrane protein CT_371 from Chlamydia trachomatis serovar D (strain ATCC VR-885 / DSM 19411 / UW-3/Cx).